We begin with the raw amino-acid sequence, 352 residues long: S-adenosylmethionine:tRNA ribosyltransferase-isomerase (352 aa).

This sequence belongs to the QueA family. Monomer.

The protein localises to the cytoplasm. It catalyses the reaction 7-aminomethyl-7-carbaguanosine(34) in tRNA + S-adenosyl-L-methionine = epoxyqueuosine(34) in tRNA + adenine + L-methionine + 2 H(+). It functions in the pathway tRNA modification; tRNA-queuosine biosynthesis. Transfers and isomerizes the ribose moiety from AdoMet to the 7-aminomethyl group of 7-deazaguanine (preQ1-tRNA) to give epoxyqueuosine (oQ-tRNA). The chain is S-adenosylmethionine:tRNA ribosyltransferase-isomerase from Paraburkholderia phytofirmans (strain DSM 17436 / LMG 22146 / PsJN) (Burkholderia phytofirmans).